The sequence spans 427 residues: Stemphyloxin II biosynthesis cluster transcription factor sthR (427 aa).

A DNA-binding region (zn(2)-C6 fungal-type) is located at residues Cys-15–Cys-45. Residues Lys-51 to Ser-70 form a disordered region. Positions His-59–Val-69 are enriched in polar residues.

Its subcellular location is the nucleus. Functionally, transcription factor that regulates the expression of the gene cluster that mediates the biosynthesis of the phytotoxin stemphyloxin II. This is Stemphyloxin II biosynthesis cluster transcription factor sthR from Phaeosphaeria nodorum (strain SN15 / ATCC MYA-4574 / FGSC 10173) (Glume blotch fungus).